We begin with the raw amino-acid sequence, 990 residues long: Importin beta-like protein kap111 (990 aa).

This sequence belongs to the importin beta family.

It is found in the nucleus. Functionally, functions as a component of the nuclear pore complex (NPC). NPC components, collectively referred to as nucleoporins (NUPs), can play the role of both NPC structural components and of docking or interaction partners for transiently associated nuclear transport factors. Active directional transport is assured by both, a Phe-Gly (FG) repeat affinity gradient for these transport factors across the NPC and a transport cofactor concentration gradient across the nuclear envelope. The polypeptide is Importin beta-like protein kap111 (kap111) (Schizosaccharomyces pombe (strain 972 / ATCC 24843) (Fission yeast)).